Reading from the N-terminus, the 659-residue chain is Enzymatic polyprotein (659 aa).

Positions 1 to 180 (MSLRNRTNPN…FLEEGGNHVD (180 aa)) are protease. Asp34 is an active-site residue. Residues 252–436 (LELKVIKPSK…EKINFLGLEI (185 aa)) form the Reverse transcriptase domain.

The protein belongs to the caulimoviridae enzymatic polyprotein family.

The catalysed reaction is DNA(n) + a 2'-deoxyribonucleoside 5'-triphosphate = DNA(n+1) + diphosphate. Its function is as follows. Encodes for at least two polypeptides: protease (PR) and reverse transcriptase (RT). The protease processes the polyprotein in cis. Reverse transcriptase is multifunctional enzyme that converts the viral RNA genome into dsDNA in viral cytoplasmic capsids. This enzyme displays a DNA polymerase activity that can copy either DNA or RNA templates, and a ribonuclease H (RNase H) activity that cleaves the RNA strand of RNA-DNA heteroduplexes in a partially processive 3'- to 5'-endonucleasic mode. Neo-synthesized pregenomic RNA (pgRNA) are encapsidated, and reverse-transcribed inside the nucleocapsid. Partial (+)DNA is synthesized from the (-)DNA template and generates the relaxed circular DNA (RC-DNA) genome. After budding and infection, the RC-DNA migrates in the nucleus, and is converted into a plasmid-like covalently closed circular DNA (cccDNA). This is Enzymatic polyprotein from Dianthus caryophyllus (Carnation).